Here is a 215-residue protein sequence, read N- to C-terminus: MKKITRIGIGGPVGSGKTAVIETITPRLIERGIKPLIITNDVVTTEDAKQVRRTLNGVLIEEKIVGVETGACPHTAVREDPSMNIAAVEELEDKYPDSDVILIESGGDNLTLTFSPALADFYIYVIDVAAGDKIPRKNGAGVCQSDILVINKRDLAPYVGASLEVMARDSKIMRGKKPFLFTNCKTGEGIDDLLRLILDMALFDVTTNRPLAASA.

GTP is bound at residue 11 to 18 (GPVGSGKT).

This sequence belongs to the SIMIBI class G3E GTPase family. UreG subfamily. In terms of assembly, homodimer. UreD, UreF and UreG form a complex that acts as a GTP-hydrolysis-dependent molecular chaperone, activating the urease apoprotein by helping to assemble the nickel containing metallocenter of UreC. The UreE protein probably delivers the nickel.

The protein resides in the cytoplasm. In terms of biological role, facilitates the functional incorporation of the urease nickel metallocenter. This process requires GTP hydrolysis, probably effectuated by UreG. The chain is Urease accessory protein UreG 2 from Methylorubrum populi (strain ATCC BAA-705 / NCIMB 13946 / BJ001) (Methylobacterium populi).